The primary structure comprises 319 residues: tRNA N6-adenosine threonylcarbamoyltransferase (319 aa).

2 residues coordinate Fe cation: H110 and H114. Residues 132-136 (VVSGG), D165, G178, D182, and N271 contribute to the substrate site. Position 300 (D300) interacts with Fe cation.

The protein belongs to the KAE1 / TsaD family. Fe(2+) is required as a cofactor.

The protein localises to the cytoplasm. The enzyme catalyses L-threonylcarbamoyladenylate + adenosine(37) in tRNA = N(6)-L-threonylcarbamoyladenosine(37) in tRNA + AMP + H(+). In terms of biological role, required for the formation of a threonylcarbamoyl group on adenosine at position 37 (t(6)A37) in tRNAs that read codons beginning with adenine. Is involved in the transfer of the threonylcarbamoyl moiety of threonylcarbamoyl-AMP (TC-AMP) to the N6 group of A37, together with TsaE and TsaB. TsaD likely plays a direct catalytic role in this reaction. In Mycoplasma capricolum subsp. capricolum (strain California kid / ATCC 27343 / NCTC 10154), this protein is tRNA N6-adenosine threonylcarbamoyltransferase.